Consider the following 179-residue polypeptide: Large ribosomal subunit protein uL5 (179 aa).

It belongs to the universal ribosomal protein uL5 family. As to quaternary structure, part of the 50S ribosomal subunit; part of the 5S rRNA/L5/L18/L25 subcomplex. Contacts the 5S rRNA and the P site tRNA. Forms a bridge to the 30S subunit in the 70S ribosome.

Functionally, this is one of the proteins that bind and probably mediate the attachment of the 5S RNA into the large ribosomal subunit, where it forms part of the central protuberance. In the 70S ribosome it contacts protein S13 of the 30S subunit (bridge B1b), connecting the 2 subunits; this bridge is implicated in subunit movement. Contacts the P site tRNA; the 5S rRNA and some of its associated proteins might help stabilize positioning of ribosome-bound tRNAs. The chain is Large ribosomal subunit protein uL5 from Buchnera aphidicola subsp. Schizaphis graminum (strain Sg).